Consider the following 435-residue polypeptide: Elongation factor 1-alpha (435 aa).

Residues 6–231 (KVHINLVVIG…DALEPPKRPV (226 aa)) form the tr-type G domain. The segment at 15 to 22 (GHVDSGKS) is G1. 15 to 22 (GHVDSGKS) is a binding site for GTP. A G2 region spans residues 71-75 (GITID). The G3 stretch occupies residues 92 to 95 (DAPG). Residues 92–96 (DAPGH) and 154–157 (NKMD) each bind GTP. Residues 154–157 (NKMD) form a G4 region. The tract at residues 195 to 197 (SGF) is G5.

This sequence belongs to the TRAFAC class translation factor GTPase superfamily. Classic translation factor GTPase family. EF-Tu/EF-1A subfamily.

It localises to the cytoplasm. Its function is as follows. This protein promotes the GTP-dependent binding of aminoacyl-tRNA to the A-site of ribosomes during protein biosynthesis. This Tetrahymena pyriformis protein is Elongation factor 1-alpha.